We begin with the raw amino-acid sequence, 97 residues long: YcgL domain-containing protein CPS_3517 (97 aa).

The YcgL domain occupies 1–85; that stretch reads MLCAIYKSAR…PQEDLLKEHK (85 aa).

This Colwellia psychrerythraea (strain 34H / ATCC BAA-681) (Vibrio psychroerythus) protein is YcgL domain-containing protein CPS_3517.